A 252-amino-acid polypeptide reads, in one-letter code: 2-succinyl-6-hydroxy-2,4-cyclohexadiene-1-carboxylate synthase (252 aa).

Belongs to the AB hydrolase superfamily. MenH family. As to quaternary structure, monomer.

The catalysed reaction is 5-enolpyruvoyl-6-hydroxy-2-succinyl-cyclohex-3-ene-1-carboxylate = (1R,6R)-6-hydroxy-2-succinyl-cyclohexa-2,4-diene-1-carboxylate + pyruvate. Its pathway is quinol/quinone metabolism; 1,4-dihydroxy-2-naphthoate biosynthesis; 1,4-dihydroxy-2-naphthoate from chorismate: step 3/7. It functions in the pathway quinol/quinone metabolism; menaquinone biosynthesis. Its function is as follows. Catalyzes a proton abstraction reaction that results in 2,5-elimination of pyruvate from 2-succinyl-5-enolpyruvyl-6-hydroxy-3-cyclohexene-1-carboxylate (SEPHCHC) and the formation of 2-succinyl-6-hydroxy-2,4-cyclohexadiene-1-carboxylate (SHCHC). This Escherichia coli (strain SMS-3-5 / SECEC) protein is 2-succinyl-6-hydroxy-2,4-cyclohexadiene-1-carboxylate synthase.